The following is a 336-amino-acid chain: Ketol-acid reductoisomerase (NADP(+)) (336 aa).

The region spanning 1–181 (MKVYYDQDAD…GGGRSGIIET (181 aa)) is the KARI N-terminal Rossmann domain. NADP(+)-binding positions include 24-27 (YGSQ), Arg-47, Ser-50, and Ser-52. His-107 is a catalytic residue. Gly-133 is an NADP(+) binding site. In terms of domain architecture, KARI C-terminal knotted spans 182-327 (SFREETETDL…ERLRGMMPWI (146 aa)). Mg(2+) contacts are provided by Asp-190, Glu-194, Glu-226, and Glu-230. Ser-251 contacts substrate.

The protein belongs to the ketol-acid reductoisomerase family. Mg(2+) serves as cofactor.

It catalyses the reaction (2R)-2,3-dihydroxy-3-methylbutanoate + NADP(+) = (2S)-2-acetolactate + NADPH + H(+). The catalysed reaction is (2R,3R)-2,3-dihydroxy-3-methylpentanoate + NADP(+) = (S)-2-ethyl-2-hydroxy-3-oxobutanoate + NADPH + H(+). The protein operates within amino-acid biosynthesis; L-isoleucine biosynthesis; L-isoleucine from 2-oxobutanoate: step 2/4. Its pathway is amino-acid biosynthesis; L-valine biosynthesis; L-valine from pyruvate: step 2/4. Functionally, involved in the biosynthesis of branched-chain amino acids (BCAA). Catalyzes an alkyl-migration followed by a ketol-acid reduction of (S)-2-acetolactate (S2AL) to yield (R)-2,3-dihydroxy-isovalerate. In the isomerase reaction, S2AL is rearranged via a Mg-dependent methyl migration to produce 3-hydroxy-3-methyl-2-ketobutyrate (HMKB). In the reductase reaction, this 2-ketoacid undergoes a metal-dependent reduction by NADPH to yield (R)-2,3-dihydroxy-isovalerate. The polypeptide is Ketol-acid reductoisomerase (NADP(+)) (Halorhodospira halophila (strain DSM 244 / SL1) (Ectothiorhodospira halophila (strain DSM 244 / SL1))).